Reading from the N-terminus, the 713-residue chain is uncharacterized protein (713 aa).

Residues 686 to 706 (VWKFNPALYSTITNIFLLIIF) form a helical membrane-spanning segment.

Belongs to the plectrovirus ORF1 family.

It is found in the host membrane. This is an uncharacterized protein from Spiroplasma melliferum (SpV1).